The chain runs to 133 residues: Ribosome-binding factor A (133 aa).

Belongs to the RbfA family. In terms of assembly, monomer. Binds 30S ribosomal subunits, but not 50S ribosomal subunits or 70S ribosomes.

The protein resides in the cytoplasm. One of several proteins that assist in the late maturation steps of the functional core of the 30S ribosomal subunit. Associates with free 30S ribosomal subunits (but not with 30S subunits that are part of 70S ribosomes or polysomes). Required for efficient processing of 16S rRNA. May interact with the 5'-terminal helix region of 16S rRNA. The polypeptide is Ribosome-binding factor A (Psychromonas ingrahamii (strain DSM 17664 / CCUG 51855 / 37)).